A 165-amino-acid polypeptide reads, in one-letter code: UPF0254 protein MmarC7_0182 (165 aa).

The protein belongs to the UPF0254 family.

The chain is UPF0254 protein MmarC7_0182 from Methanococcus maripaludis (strain C7 / ATCC BAA-1331).